The chain runs to 352 residues: Quinolinate synthase (352 aa).

Iminosuccinate-binding residues include His-48 and Ser-69. Cys-114 is a binding site for [4Fe-4S] cluster. Residues 140–142 (YAN) and Ser-157 each bind iminosuccinate. A [4Fe-4S] cluster-binding site is contributed by Cys-201. Residues 227 to 229 (HPE) and Thr-244 contribute to the iminosuccinate site. Cys-298 lines the [4Fe-4S] cluster pocket.

It belongs to the quinolinate synthase family. Type 1 subfamily. Requires [4Fe-4S] cluster as cofactor.

It localises to the cytoplasm. The catalysed reaction is iminosuccinate + dihydroxyacetone phosphate = quinolinate + phosphate + 2 H2O + H(+). It participates in cofactor biosynthesis; NAD(+) biosynthesis; quinolinate from iminoaspartate: step 1/1. Its function is as follows. Catalyzes the condensation of iminoaspartate with dihydroxyacetone phosphate to form quinolinate. The protein is Quinolinate synthase of Pseudomonas putida (strain ATCC 700007 / DSM 6899 / JCM 31910 / BCRC 17059 / LMG 24140 / F1).